The sequence spans 116 residues: Appetite-regulating hormone (116 aa).

A signal peptide spans 1–23 (MPAPRTICSLLLLSMLWMDLAMA). Ser26 carries O-decanoyl serine; alternate lipidation. A lipid anchor (O-hexanoyl serine; alternate) is attached at Ser26. The O-octanoyl serine; alternate moiety is linked to residue Ser26. The interval 29–67 (SPEHQKLQRKEPKKPSGRLKPRALEGQFDPDVGSQEEGA) is disordered. The span at 31–42 (EHQKLQRKEPKK) shows a compositional bias: basic and acidic residues. The propeptide at 51-74 (ALEGQFDPDVGSQEEGAEDELEIR) is removed in mature form. Leu97 is modified (leucine amide). Positions 98 to 116 (GKFLQDILWEEAEETLADE) are cleaved as a propeptide — removed in mature form.

Belongs to the motilin family. Post-translationally, O-octanoylated by GOAT/MBOAT4. O-octanoylation is essential for ghrelin activity. In terms of processing, amidation of Leu-97 is essential for obestatin activity.

It localises to the secreted. Its function is as follows. Ghrelin is the ligand for growth hormone secretagogue receptor type 1 (GHSR). Induces the release of growth hormone from the pituitary. Has an appetite-stimulating effect, induces adiposity and stimulates gastric acid secretion. Involved in growth regulation. Functionally, obestatin may be the ligand for GPR39. May have an appetite-reducing effect resulting in decreased food intake. May reduce gastric emptying activity and jejunal motility. The protein is Appetite-regulating hormone (GHRL) of Capra hircus (Goat).